The primary structure comprises 62 residues: Calmodulin regulator protein PCP4 (62 aa).

The interval 1-40 is disordered; that stretch reads MSERQGAGTTNGKDKPSGENDGQKKVQEEFDIDMDAPETE. Residues 12 to 28 are compositionally biased toward basic and acidic residues; sequence GKDKPSGENDGQKKVQE. Positions 28-40 are acidic; binds calcium and is required for modulating the calcium-binding kinetics of calmodulin; that stretch reads EEFDIDMDAPETE. In terms of domain architecture, IQ spans 39–62; sequence TERAAVAIQSQFRKFQKKKAGSQS.

This sequence belongs to the PCP4 family. Binds to both calcium-free and calcium-bound calmodulin. The affinity for the calcium-bound form is 50-fold greater.

In terms of biological role, functions as a modulator of calcium-binding by calmodulin. Thereby, regulates calmodulin activity and the different processes it controls. For instance, may play a role in neuronal differentiation through activation of calmodulin-dependent kinase signaling pathways. This Bos taurus (Bovine) protein is Calmodulin regulator protein PCP4.